The following is a 394-amino-acid chain: Phosphopentomutase (394 aa).

Residues D13, D286, H291, D327, H328, and H339 each coordinate Mn(2+).

The protein belongs to the phosphopentomutase family. It depends on Mn(2+) as a cofactor.

It localises to the cytoplasm. It carries out the reaction 2-deoxy-alpha-D-ribose 1-phosphate = 2-deoxy-D-ribose 5-phosphate. It catalyses the reaction alpha-D-ribose 1-phosphate = D-ribose 5-phosphate. The protein operates within carbohydrate degradation; 2-deoxy-D-ribose 1-phosphate degradation; D-glyceraldehyde 3-phosphate and acetaldehyde from 2-deoxy-alpha-D-ribose 1-phosphate: step 1/2. Its function is as follows. Isomerase that catalyzes the conversion of deoxy-ribose 1-phosphate (dRib-1-P) and ribose 1-phosphate (Rib-1-P) to deoxy-ribose 5-phosphate (dRib-5-P) and ribose 5-phosphate (Rib-5-P), respectively. The polypeptide is Phosphopentomutase (Bacillus cereus (strain G9842)).